We begin with the raw amino-acid sequence, 341 residues long: UDP-glucuronic acid decarboxylase 5 (341 aa).

The interval 1 to 21 (MASSDKQTSPKPPPSPSPLRN) is disordered. Residue 60–85 (DNYFTGSKDNLKKWIGHPRFELIRHD) coordinates NAD(+). A substrate-binding site is contributed by arginine 169. The Proton acceptor role is filled by tyrosine 172. Residue 172–176 (YDEGK) participates in NAD(+) binding. Substrate is bound at residue asparagine 201. Arginine 213 serves as a coordination point for NAD(+). Substrate contacts are provided by residues 214–218 (VVSNF), 231–238 (QKPGTQTR), and 298–302 (DPRQR).

The protein belongs to the NAD(P)-dependent epimerase/dehydratase family. UDP-glucuronic acid decarboxylase subfamily. It depends on NAD(+) as a cofactor.

It localises to the cytoplasm. It carries out the reaction UDP-alpha-D-glucuronate + H(+) = UDP-alpha-D-xylose + CO2. The protein operates within nucleotide-sugar biosynthesis; UDP-alpha-D-xylose biosynthesis; UDP-alpha-D-xylose from UDP-alpha-D-glucuronate: step 1/1. In terms of biological role, catalyzes the NAD-dependent decarboxylation of UDP-glucuronic acid to UDP-xylose. Necessary for the biosynthesis of the core tetrasaccharide in glycosaminoglycan biosynthesis. This Arabidopsis thaliana (Mouse-ear cress) protein is UDP-glucuronic acid decarboxylase 5 (UXS5).